A 191-amino-acid polypeptide reads, in one-letter code: UPF0149 protein VV1_1551 (191 aa).

The protein belongs to the UPF0149 family.

The chain is UPF0149 protein VV1_1551 from Vibrio vulnificus (strain CMCP6).